The primary structure comprises 211 residues: Large ribosomal subunit protein eL13 (211 aa).

K16 carries the N6-acetyllysine modification. A phosphoserine mark is found at S52, S77, and S106. Residues K123 and K145 each participate in a glycyl lysine isopeptide (Lys-Gly) (interchain with G-Cter in SUMO2) cross-link. K174 is covalently cross-linked (Glycyl lysine isopeptide (Lys-Gly) (interchain with G-Cter in SUMO1); alternate). Residues K174 and K177 each participate in a glycyl lysine isopeptide (Lys-Gly) (interchain with G-Cter in SUMO2); alternate cross-link. K177 bears the N6-acetyllysine; alternate mark.

This sequence belongs to the eukaryotic ribosomal protein eL13 family. As to quaternary structure, component of the large ribosomal subunit.

The protein resides in the cytoplasm. Its function is as follows. Component of the large ribosomal subunit. The ribosome is a large ribonucleoprotein complex responsible for the synthesis of proteins in the cell. The sequence is that of Large ribosomal subunit protein eL13 (Rpl13) from Mus musculus (Mouse).